Reading from the N-terminus, the 148-residue chain is MGGKELSEEQVASMREAFSLFDTDGDGRIAPSELGVLMRSLGGNPTQAQLRDIAAQEKLTAPFDFPRFLDLMRAHLRPEPFDRPLRDAFRVLDKDASGTVSVADLRHVLTSIGEKLEPHEFDEWIREVDVAPDGTIRYDDFIRRIVAK.

EF-hand domains lie at 9 to 44, 80 to 115, and 116 to 148; these read EQVA…LGGN, PFDR…IGEK, and LEPH…IVAK. Ca(2+)-binding residues include aspartate 22, aspartate 24, aspartate 26, arginine 28, glutamate 33, aspartate 93, aspartate 95, serine 97, threonine 99, and aspartate 104.

In terms of biological role, potential calcium sensor. This chain is Probable calcium-binding protein CML7 (CML7), found in Oryza sativa subsp. japonica (Rice).